A 239-amino-acid chain; its full sequence is Suppressor of organelle fusion 1 (239 aa).

This sequence belongs to the WD repeat WDR91 family. As to quaternary structure, interacts with sorf-2; the interaction is direct. Interacts with bec-1.

The protein resides in the early endosome. Its subcellular location is the late endosome. It localises to the cytoplasm. Its function is as follows. Together with sorf-2 negatively regulates the levels of phosphatidylinositol 3-phosphate (PtdIns3P) to enable the conversion of early endosomes to late endosomes. Binds to sorf-2 and the sorf-1-sorf-2 complex likely acts through bec-1, a non-catalytic subunit of phosphatidylinositol 3-kinase (PI3K), to suppress PI3K activity, thereby negatively regulating endosomal PtdIns3P levels. This is Suppressor of organelle fusion 1 from Caenorhabditis elegans.